A 513-amino-acid polypeptide reads, in one-letter code: Putative ATP-dependent RNA helicase QP509L (513 aa).

One can recognise a Helicase ATP-binding domain in the interval 110–262 (KKLLSPYGRF…KIIIHHLGQP (153 aa)). Position 123-130 (123-130 (LNTGLGKT)) interacts with ATP. A DEAH box motif is present at residues 215 to 218 (DEAH).

The protein belongs to the DEAD box helicase family. DEAH subfamily.

The enzyme catalyses ATP + H2O = ADP + phosphate + H(+). The chain is Putative ATP-dependent RNA helicase QP509L from Ornithodoros (relapsing fever ticks).